Consider the following 393-residue polypeptide: Xyloside xylosyltransferase 1 (393 aa).

The Cytoplasmic portion of the chain corresponds to 1-23 (MGLLRGGLPCARAMARLGAVRSH). Residues 24 to 44 (YCALLLAAALAVCAFYYLGSG) traverse the membrane as a helical; Signal-anchor for type II membrane protein segment. The Lumenal portion of the chain corresponds to 45-393 (RETFSSATKR…GNCNTPIPED (349 aa)). 104–106 (MFT) is a UDP-alpha-D-xylose binding site. Asp226 is a binding site for Mn(2+). Position 227 (Leu227) interacts with UDP-alpha-D-xylose. Asp228 serves as a coordination point for Mn(2+). The interaction with target proteins stretch occupies residues 263–266 (HTFW). UDP-alpha-D-xylose-binding residues include Ser290, Leu328, and Gln331. Residues Gln331 and Trp360 each contribute to the a glycoprotein site. 2 disulfide bridges follow: Cys350–Cys375 and Cys357–Cys386. Residue His383 participates in Mn(2+) binding. Position 385 (Asn385) interacts with a glycoprotein.

This sequence belongs to the glycosyltransferase 8 family. As to quaternary structure, homodimer. Dimer formation may be essential for the retention in endoplasmic reticulum. Mg(2+) serves as cofactor. It depends on Mn(2+) as a cofactor.

The protein localises to the endoplasmic reticulum membrane. It carries out the reaction 3-O-[alpha-D-xylosyl-(1-&gt;3)-beta-D-glucosyl]-L-seryl-[EGF-like domain protein] + UDP-alpha-D-xylose = 3-O-[alpha-D-xylosyl-(1-&gt;3)-alpha-D-xylosyl-(1-&gt;3)-beta-D-glucosyl]-L-seryl-[EGF-like domain protein] + UDP + H(+). Alpha-1,3-xylosyltransferase, which elongates the O-linked xylose-glucose disaccharide attached to EGF-like repeats in the extracellular domain of target proteins by catalyzing the addition of the second xylose. Known targets include Notch proteins and coagulation factors, such as F9. The chain is Xyloside xylosyltransferase 1 (XXYLT1) from Homo sapiens (Human).